An 847-amino-acid chain; its full sequence is Putative membrane protein SCO5905 (847 aa).

Transmembrane regions (helical) follow at residues 18 to 38, 187 to 207, 215 to 235, 248 to 268, 302 to 322, 326 to 346, 381 to 401, 539 to 559, 562 to 582, 600 to 620, 643 to 663, and 672 to 692; these read AVVV…APAL, GGDK…LLAI, LVPL…GAIL, ASIM…IITA, IVLA…GFGP, LGVA…VLLL, VKVA…LLGY, DTTL…VLLL, LLAP…TLGA, VTAY…IFIM, TGGV…VLMT, and FGFA…PLLV. The segment at 708-729 is disordered; the sequence is RPGTPQTPSTPTSEPPSADAPA. 3 helical membrane passes run 744 to 764, 778 to 798, and 808 to 828; these read FTWI…GMYL, FGTL…LVAI, and TIFA…EIWA.

This sequence belongs to the resistance-nodulation-cell division (RND) (TC 2.A.6) family. MmpL subfamily.

The protein localises to the cell membrane. This chain is Putative membrane protein SCO5905, found in Streptomyces coelicolor (strain ATCC BAA-471 / A3(2) / M145).